Reading from the N-terminus, the 535-residue chain is Serum response factor-binding protein 1 (535 aa).

Coiled coils occupy residues 5-27 (LNLNNEVVKLRKDVKKVKVLIIR) and 107-177 (LKQK…EKCK). Composition is skewed to basic and acidic residues over residues 128–151 (AAEGEREREKDEPEQVTKIKETKK), 159–191 (KNTEEIKSAKEHVKEEKCKNLLEDSDKGTEKAL), 205–325 (AENK…ERPV), 361–376 (DKEKEYFDDSTEERFY), 406–432 (SDKDGSKQKEEKVPPTKEKAQTSEVQK), and 460–472 (TKRETNFRQERNK). 2 disordered regions span residues 128-435 (AAEG…KEIP) and 453-535 (TKPK…VFDD).

Its subcellular location is the cytoplasm. The protein resides in the perinuclear region. Its function is as follows. May be involved in regulating transcriptional activation of cardiac genes during the aging process. May play a role in biosynthesis and/or processing of SLC2A4 in adipose cells. This Xenopus tropicalis (Western clawed frog) protein is Serum response factor-binding protein 1.